The chain runs to 502 residues: ATP synthase subunit alpha (502 aa).

169–176 is an ATP binding site; that stretch reads GDRQTGKT.

This sequence belongs to the ATPase alpha/beta chains family. In terms of assembly, F-type ATPases have 2 components, CF(1) - the catalytic core - and CF(0) - the membrane proton channel. CF(1) has five subunits: alpha(3), beta(3), gamma(1), delta(1), epsilon(1). CF(0) has three main subunits: a(1), b(2) and c(9-12). The alpha and beta chains form an alternating ring which encloses part of the gamma chain. CF(1) is attached to CF(0) by a central stalk formed by the gamma and epsilon chains, while a peripheral stalk is formed by the delta and b chains.

Its subcellular location is the cell membrane. The enzyme catalyses ATP + H2O + 4 H(+)(in) = ADP + phosphate + 5 H(+)(out). Its function is as follows. Produces ATP from ADP in the presence of a proton gradient across the membrane. The alpha chain is a regulatory subunit. This chain is ATP synthase subunit alpha, found in Staphylococcus aureus (strain Mu3 / ATCC 700698).